We begin with the raw amino-acid sequence, 249 residues long: Large ribosomal subunit protein uL16m (249 aa).

Belongs to the universal ribosomal protein uL16 family. Component of the mitochondrial large ribosomal subunit (mt-LSU). Mature N.crassa 74S mitochondrial ribosomes consist of a small (37S) and a large (54S) subunit. The 37S small subunit contains a 16S ribosomal RNA (16S mt-rRNA) and 32 different proteins. The 54S large subunit contains a 23S rRNA (23S mt-rRNA) and 42 different proteins.

The protein resides in the mitochondrion. Component of the mitochondrial ribosome (mitoribosome), a dedicated translation machinery responsible for the synthesis of mitochondrial genome-encoded proteins, including at least some of the essential transmembrane subunits of the mitochondrial respiratory chain. The mitoribosomes are attached to the mitochondrial inner membrane and translation products are cotranslationally integrated into the membrane. This is Large ribosomal subunit protein uL16m (mrpl16) from Neurospora crassa (strain ATCC 24698 / 74-OR23-1A / CBS 708.71 / DSM 1257 / FGSC 987).